Consider the following 1140-residue polypeptide: Receptor-type guanylate cyclase gcy-3 (1140 aa).

The N-terminal stretch at 1-21 (MKNVFQLLIPLFFHLFSLVSL) is a signal peptide. Residues 22 to 495 (QNIPVSTGTT…CPLPFWEQYG (474 aa)) lie on the Extracellular side of the membrane. 7 N-linked (GlcNAc...) asparagine glycosylation sites follow: N220, N301, N349, N385, N418, N441, and N459. Residues 496–516 (ILIFVGAGVFLIMITTNLICF) traverse the membrane as a helical segment. Topologically, residues 517–1140 (LFMIKNRREE…RQYKMDTLKI (624 aa)) are cytoplasmic. Residues 538-826 (FVKLRELERK…NICEQLRDLM (289 aa)) enclose the Protein kinase domain. ATP is bound by residues 544–552 (LERKSKGTS) and K582. Residues 897-1027 (TVFFSDVVKF…DTVNTASRME (131 aa)) form the Guanylate cyclase domain. The segment at 1083-1140 (PSISNRSTPPVTQERFTVRAPDTPEARSVSSHGSRPSSNHNNNNDPLYRQYKMDTLKI) is disordered. Residues 1084-1097 (SISNRSTPPVTQER) show a composition bias toward polar residues. Residues 1109 to 1126 (RSVSSHGSRPSSNHNNNN) are compositionally biased toward low complexity.

This sequence belongs to the adenylyl cyclase class-4/guanylyl cyclase family. In terms of tissue distribution, expressed asymmetrically in ASE right (ASER) sensory neuron and bilaterally in ASI sensory neurons. Expressed in PVT interneuron.

The protein localises to the cell membrane. The catalysed reaction is GTP = 3',5'-cyclic GMP + diphosphate. Guanylate cyclase involved in the production of the second messenger cGMP. This Caenorhabditis elegans protein is Receptor-type guanylate cyclase gcy-3.